A 272-amino-acid polypeptide reads, in one-letter code: WIMGHMVNNIKQIDEFVNLGSNAIETDVSFDKKANPEYTYHGTPCDCGRDCLRWEYFNDFVKALRTATTPGNSKYDKLFLVVFDLKTGSLYDYQASEAGTKLAKNLLQHYWNNGNNGGRAYIILSIPNLKHYKLITGFQQTLKDEGHAELLDKVGYDFSGNDDIGDVQKTYEKAGVTGHVWQSDGITNCLLRGFTRINAAVANRDSANGIINKVYYWTVDKRQTTRDTLDANVDGIMTNYPDITVEILNEDAYKTKFRIATYEDNPWETFKE.

Residue histidine 5 is part of the active site. Mg(2+) contacts are provided by glutamate 25 and aspartate 27. The Nucleophile role is filled by histidine 41. 2 disulfide bridges follow: cysteine 45/cysteine 51 and cysteine 47/cysteine 189. Aspartate 84 lines the Mg(2+) pocket.

The protein belongs to the arthropod phospholipase D family. Class II subfamily. The cofactor is Mg(2+). Expressed by the venom gland.

Its subcellular location is the secreted. The enzyme catalyses an N-(acyl)-sphingosylphosphocholine = an N-(acyl)-sphingosyl-1,3-cyclic phosphate + choline. The catalysed reaction is an N-(acyl)-sphingosylphosphoethanolamine = an N-(acyl)-sphingosyl-1,3-cyclic phosphate + ethanolamine. It carries out the reaction a 1-acyl-sn-glycero-3-phosphocholine = a 1-acyl-sn-glycero-2,3-cyclic phosphate + choline. It catalyses the reaction a 1-acyl-sn-glycero-3-phosphoethanolamine = a 1-acyl-sn-glycero-2,3-cyclic phosphate + ethanolamine. Its function is as follows. Dermonecrotic toxins cleave the phosphodiester linkage between the phosphate and headgroup of certain phospholipids (sphingolipid and lysolipid substrates), forming an alcohol (often choline) and a cyclic phosphate. This toxin acts on sphingomyelin (SM). It may also act on ceramide phosphoethanolamine (CPE), lysophosphatidylcholine (LPC) and lysophosphatidylethanolamine (LPE), but not on lysophosphatidylserine (LPS), and lysophosphatidylglycerol (LPG). It acts by transphosphatidylation, releasing exclusively cyclic phosphate products as second products. Induces dermonecrosis, hemolysis, increased vascular permeability, edema, inflammatory response, and platelet aggregation. The chain is Dermonecrotic toxin LvSicTox-alphaIC1bi from Loxosceles variegata (Recluse spider).